The sequence spans 145 residues: Phospholipase A2 phospholipin (145 aa).

The first 15 residues, 1 to 15 (MVDLARRCSGSTEGR), serve as a signal peptide directing secretion. The Ca(2+) site is built by W24, G26, and G28. 5 disulfides stabilise this stretch: C25–C46, C45–C84, C52–C77, C75–C116, and C121–C132. The active site involves H49. A Ca(2+)-binding site is contributed by D50. The propeptide occupies 124–128 (KRSGR).

The protein belongs to the phospholipase A2 family. Group III subfamily. In terms of assembly, heterodimer composed of a small subunit and a large subunit; disulfid-linked. Ca(2+) serves as cofactor. In terms of tissue distribution, expressed by the venom gland.

The protein localises to the secreted. The catalysed reaction is a 1,2-diacyl-sn-glycero-3-phosphocholine + H2O = a 1-acyl-sn-glycero-3-phosphocholine + a fatty acid + H(+). Functionally, scorpion venom phospholipase A2 (PLA2) that contains enzymatic activity, but does not inhibit ryanodine receptors in contrary to imperatoxin-1, another heterodimer of P.imperator venom. PLA2 catalyzes the calcium-dependent hydrolysis of the 2-acyl groups in 3-sn-phosphoglycerides. The chain is Phospholipase A2 phospholipin from Pandinus imperator (Emperor scorpion).